Reading from the N-terminus, the 187-residue chain is Alkyl hydroperoxide reductase C (187 aa).

The region spanning 2 to 157 is the Thioredoxin domain; sequence SLINTKIKPF…LLRKIKAAQY (156 aa). C47 (cysteine sulfenic acid (-SOH) intermediate) is an active-site residue.

This sequence belongs to the peroxiredoxin family. AhpC/Prx1 subfamily. Homodimer; disulfide-linked, upon oxidation. 5 homodimers assemble to form a ring-like decamer.

The protein localises to the cytoplasm. The enzyme catalyses a hydroperoxide + NADH + H(+) = an alcohol + NAD(+) + H2O. Functionally, thiol-specific peroxidase that catalyzes the reduction of hydrogen peroxide and organic hydroperoxides to water and alcohols, respectively. Plays a role in cell protection against oxidative stress by detoxifying peroxides. The protein is Alkyl hydroperoxide reductase C (ahpC) of Salmonella typhi.